A 239-amino-acid chain; its full sequence is Serine protease SplF (239 aa).

The signal sequence occupies residues 1–36; sequence MNKNIIIKSIGALTILTSITGVGTTMVEGIQQTAKA. Active-site charge relay system residues include histidine 75, aspartate 114, and serine 192.

This sequence belongs to the peptidase S1B family.

The protein resides in the secreted. This is Serine protease SplF (splF) from Staphylococcus aureus (strain USA300).